The following is a 156-amino-acid chain: Ribosomal RNA large subunit methyltransferase H (156 aa).

S-adenosyl-L-methionine-binding positions include Leu-72, Gly-104, and Leu-123–Phe-128.

This sequence belongs to the RNA methyltransferase RlmH family. As to quaternary structure, homodimer.

The protein resides in the cytoplasm. The catalysed reaction is pseudouridine(1915) in 23S rRNA + S-adenosyl-L-methionine = N(3)-methylpseudouridine(1915) in 23S rRNA + S-adenosyl-L-homocysteine + H(+). In terms of biological role, specifically methylates the pseudouridine at position 1915 (m3Psi1915) in 23S rRNA. The sequence is that of Ribosomal RNA large subunit methyltransferase H from Nitratidesulfovibrio vulgaris (strain ATCC 29579 / DSM 644 / CCUG 34227 / NCIMB 8303 / VKM B-1760 / Hildenborough) (Desulfovibrio vulgaris).